The following is a 637-amino-acid chain: MPIDPARLAFTDDGTPCSAAFGDVYHARGGGLEQARFVFIAGNGLPARWQGREHFAILETGFGFGLNFLATWDAWRADPKRCERLHFVSVERHPFTREDLATLHARWPELAPLAAELADHWPTLTPGMHRLHLNRGRVVLTLLFGDARELLPRLECGADAFFLDGFSPACNPELWSAALLAELGRLAASGATLATWSVSGDVRRALAAAGFDCEKAPGFDGKRQMCRGRHRDVGTGPAPAAAAARHALVIGAGLAGSSTAERLAARGWHVDVIDAADGPGEGASGNLTGVLRPLPSLDDNRLARITRAGALYGLHHLRQLTEAGLPVRWDACGVLHLARDPVHEDKQRRVVEAHRPPSDYLRFVERDEASTLAGWPLPVGGWWFPQGAWVSPPSLCAANLMTHPDLIRCHFGRAMQRLEASADGWTAFDADGKAIASAPVAVLANGVGIRAVPQAAALPVRSARGQVTHFPAAAGSPPNVVVCRLGYVAPALDGVRSAGATFSVDDDEPALRDADQRENLAKLEFILPGYAAAVDTAALAGRVGFRPASPDRLPMVGEVPAVLRADRATPLAQIPRHPGLYAVAGFGARGLVWASLAAELLASHIAGEPLPLERELVDALDPARYLLRPARGMTREG.

The interval 1–231 (MPIDPARLAF…KRQMCRGRHR (231 aa)) is tRNA (mnm(5)s(2)U34)-methyltransferase. An FAD-dependent cmnm(5)s(2)U34 oxidoreductase region spans residues 250-637 (IGAGLAGSST…RPARGMTREG (388 aa)).

It in the N-terminal section; belongs to the methyltransferase superfamily. tRNA (mnm(5)s(2)U34)-methyltransferase family. The protein in the C-terminal section; belongs to the DAO family. FAD is required as a cofactor.

It is found in the cytoplasm. The catalysed reaction is 5-aminomethyl-2-thiouridine(34) in tRNA + S-adenosyl-L-methionine = 5-methylaminomethyl-2-thiouridine(34) in tRNA + S-adenosyl-L-homocysteine + H(+). Functionally, catalyzes the last two steps in the biosynthesis of 5-methylaminomethyl-2-thiouridine (mnm(5)s(2)U) at the wobble position (U34) in tRNA. Catalyzes the FAD-dependent demodification of cmnm(5)s(2)U34 to nm(5)s(2)U34, followed by the transfer of a methyl group from S-adenosyl-L-methionine to nm(5)s(2)U34, to form mnm(5)s(2)U34. The protein is tRNA 5-methylaminomethyl-2-thiouridine biosynthesis bifunctional protein MnmC of Aromatoleum aromaticum (strain DSM 19018 / LMG 30748 / EbN1) (Azoarcus sp. (strain EbN1)).